Here is a 626-residue protein sequence, read N- to C-terminus: Kinesin-like protein Klp59C (626 aa).

A globular region spans residues 1 to 183; sequence MDKLSIEQKI…VRSGTTNERI (183 aa). The tract at residues 68–155 is disordered; the sequence is CSGGNAASAN…GKNEDPGNPN (88 aa). A compositionally biased stretch (polar residues) spans 72–96; sequence NAASANQTASISPRSMKQRIATGSL. The span at 101-112 shows a compositional bias: low complexity; that stretch reads ATAPPRQQTAPP. Basic and acidic residues predominate over residues 113 to 150; that stretch reads VREDEVVHQAERMRKERERRREAQARTRLDREQGKNED. A coiled-coil region spans residues 115-150; sequence EDEVVHQAERMRKERERRREAQARTRLDREQGKNED. The region spanning 187–521 is the Kinesin motor domain; it reads QIMVCVRKRP…LRYADRVKEL (335 aa). Position 277 to 284 (277 to 284) interacts with ATP; that stretch reads GQTGSGKT. A disordered region spans residues 557-608; that stretch reads ASSTSMPGGGNQAQQHTNTANDLNRSQKPTSKPTYPTSGQQLVQRKGSSQRE.

It belongs to the TRAFAC class myosin-kinesin ATPase superfamily. Kinesin family. MCAK/KIF2 subfamily.

It localises to the chromosome. The protein localises to the centromere. The protein resides in the kinetochore. It is found in the cytoplasm. Its subcellular location is the cytoskeleton. It localises to the spindle pole. Required during anaphase to drive sister chromatid separation to actively depolymerize kinetochore microtubules at their kinetochore-associated plus ends, thereby contributing to chromatid mobility through a 'Pac-man' mechanism. This Drosophila melanogaster (Fruit fly) protein is Kinesin-like protein Klp59C (Klp59C).